We begin with the raw amino-acid sequence, 298 residues long: ATP synthase gamma chain (298 aa).

The protein belongs to the ATPase gamma chain family. In terms of assembly, F-type ATPases have 2 components, CF(1) - the catalytic core - and CF(0) - the membrane proton channel. CF(1) has five subunits: alpha(3), beta(3), gamma(1), delta(1), epsilon(1). CF(0) has three main subunits: a, b and c.

It is found in the cell inner membrane. Functionally, produces ATP from ADP in the presence of a proton gradient across the membrane. The gamma chain is believed to be important in regulating ATPase activity and the flow of protons through the CF(0) complex. This is ATP synthase gamma chain from Francisella tularensis subsp. mediasiatica (strain FSC147).